Here is a 748-residue protein sequence, read N- to C-terminus: Basic juvenile hormone-suppressible protein 1 (748 aa).

An N-terminal signal peptide occupies residues 1-17; it reads MRVLVLVASLGLRGSVV.

The protein belongs to the hemocyanin family. Fat body, and hemolymph of larvae.

This is Basic juvenile hormone-suppressible protein 1 (BJSP-1) from Trichoplusia ni (Cabbage looper).